A 1332-amino-acid polypeptide reads, in one-letter code: Aldehyde oxidase 1 (1332 aa).

In terms of domain architecture, 2Fe-2S ferredoxin-type spans Ser4–Val91. Residues Cys43, Cys48, Cys51, and Cys73 each coordinate [2Fe-2S] cluster. A Mo-molybdopterin-binding site is contributed by Gln112. [2Fe-2S] cluster contacts are provided by Cys113, Cys116, Cys148, and Cys150. Residue Cys150 participates in Mo-molybdopterin binding. The region spanning Phe234–Lys419 is the FAD-binding PCMH-type domain. FAD-binding positions include Val262–Val269, Ala343, Ser352, His356, Asp365, and Leu409. Mo-molybdopterin contacts are provided by residues Ala800 to Phe801, Met1041, Gly1082 to Val1085, Gln1197, and Leu1262. Glu1264 acts as the Proton acceptor; for azaheterocycle hydroxylase activity in catalysis.

This sequence belongs to the xanthine dehydrogenase family. Homodimer. The cofactor is [2Fe-2S] cluster. It depends on FAD as a cofactor. Mo-molybdopterin serves as cofactor. As to expression, expressed in liver.

It is found in the cytoplasm. It catalyses the reaction an aldehyde + O2 + H2O = a carboxylate + H2O2 + H(+). The catalysed reaction is retinal + O2 + H2O = retinoate + H2O2 + H(+). Its activity is regulated as follows. Inhibited by menadione and isovanillin. Not inhibited by allopurinol, a xanthine dehydrogenase potent inhibitor. Oxidase with broad substrate specificity, oxidizing aromatic azaheterocycles, such as N1-methylnicotinamide, N-methylphthalazinium and phthalazine, as well as aldehydes, such as benzaldehyde, retinal, pyridoxal, and vanillin. Plays a key role in the metabolism of xenobiotics and drugs containing aromatic azaheterocyclic substituents. Participates in the bioactivation of prodrugs such as famciclovir, catalyzing the oxidation step from 6-deoxypenciclovir to penciclovir, which is a potent antiviral agent. Is probably involved in the regulation of reactive oxygen species homeostasis. May be a prominent source of superoxide generation via the one-electron reduction of molecular oxygen. May also catalyze nitric oxide (NO) production via the reduction of nitrite to NO with NADH or aldehyde as electron donor. May play a role in adipogenesis. In Cavia porcellus (Guinea pig), this protein is Aldehyde oxidase 1.